A 315-amino-acid chain; its full sequence is Methionyl-tRNA formyltransferase (315 aa).

Residue S113–P116 participates in (6S)-5,6,7,8-tetrahydrofolate binding.

The protein belongs to the Fmt family.

The enzyme catalyses L-methionyl-tRNA(fMet) + (6R)-10-formyltetrahydrofolate = N-formyl-L-methionyl-tRNA(fMet) + (6S)-5,6,7,8-tetrahydrofolate + H(+). In terms of biological role, attaches a formyl group to the free amino group of methionyl-tRNA(fMet). The formyl group appears to play a dual role in the initiator identity of N-formylmethionyl-tRNA by promoting its recognition by IF2 and preventing the misappropriation of this tRNA by the elongation apparatus. This Aliivibrio fischeri (strain MJ11) (Vibrio fischeri) protein is Methionyl-tRNA formyltransferase.